A 474-amino-acid polypeptide reads, in one-letter code: Glutathione synthetase (474 aa).

Ala2 is modified (N-acetylalanine). Arg125 provides a ligand contact to substrate. Glu144 serves as a coordination point for ATP. Mg(2+) is bound by residues Glu144 and Asn146. Substrate is bound by residues 148 to 151 (ISAS), 214 to 216 (ERN), Gln220, and 267 to 270 (RDGY). ATP is bound by residues Lys305, 364–373 (KPQREGGGNN), Tyr375, and 398–401 (MEKI). Glu368 provides a ligand contact to Mg(2+). Phosphoserine is present on Ser415. Glu425 provides a ligand contact to ATP. Residue Arg450 coordinates substrate. Lys452 and Asp458 together coordinate ATP. 461–462 (VA) contacts substrate.

It belongs to the eukaryotic GSH synthase family. As to quaternary structure, homodimer. Mg(2+) is required as a cofactor.

The catalysed reaction is gamma-L-glutamyl-L-cysteine + glycine + ATP = glutathione + ADP + phosphate + H(+). The enzyme catalyses gamma-L-glutamyl-(2S)-2-aminobutanoate + glycine + ATP = ophthalmate + ADP + phosphate + H(+). The protein operates within sulfur metabolism; glutathione biosynthesis; glutathione from L-cysteine and L-glutamate: step 2/2. In terms of biological role, catalyzes the production of glutathione from gamma-glutamylcysteine and glycine in an ATP-dependent manner. Glutathione (gamma-glutamylcysteinylglycine, GSH) is the most abundant intracellular thiol in living aerobic cells and is required for numerous processes including the protection of cells against oxidative damage, amino acid transport, the detoxification of foreign compounds, the maintenance of protein sulfhydryl groups in a reduced state and acts as a cofactor for a number of enzymes. Participates in ophthalmate biosynthesis in hepatocytes. In Homo sapiens (Human), this protein is Glutathione synthetase.